The chain runs to 145 residues: D-aminoacyl-tRNA deacylase (145 aa).

The Gly-cisPro motif, important for rejection of L-amino acids motif lies at 137–138 (GP).

It belongs to the DTD family. As to quaternary structure, homodimer.

Its subcellular location is the cytoplasm. It carries out the reaction glycyl-tRNA(Ala) + H2O = tRNA(Ala) + glycine + H(+). It catalyses the reaction a D-aminoacyl-tRNA + H2O = a tRNA + a D-alpha-amino acid + H(+). In terms of biological role, an aminoacyl-tRNA editing enzyme that deacylates mischarged D-aminoacyl-tRNAs. Also deacylates mischarged glycyl-tRNA(Ala), protecting cells against glycine mischarging by AlaRS. Acts via tRNA-based rather than protein-based catalysis; rejects L-amino acids rather than detecting D-amino acids in the active site. By recycling D-aminoacyl-tRNA to D-amino acids and free tRNA molecules, this enzyme counteracts the toxicity associated with the formation of D-aminoacyl-tRNA entities in vivo and helps enforce protein L-homochirality. The sequence is that of D-aminoacyl-tRNA deacylase from Shewanella sp. (strain MR-4).